The following is a 288-amino-acid chain: Fibroblast growth factor 2 (288 aa).

The disordered stretch occupies residues 1-133; that stretch reads MVGVGGGDVE…RGSRPGPAGT (133 aa). Residues 1–142 constitute a propeptide, or 93, or 124, or 125, or 131, or 161; the sequence is MVGVGGGDVE…TMAAGSITTL (142 aa). Low complexity predominate over residues 52–64; it reads SVNPRSRAAGSPR. The span at 68–84 shows a compositional bias: basic and acidic residues; it reads RRTEERPSGSRLGDRGR. Arg-108, Arg-110, and Arg-112 each carry omega-N-methylarginine; alternate. Arg-108, Arg-110, and Arg-112 each carry symmetric dimethylarginine; alternate. The span at 113 to 132 shows a compositional bias: low complexity; that stretch reads GTAAPRAAPAARGSRPGPAG. Position 169 (Asn-169) interacts with heparin. The Cell attachment site; atypical signature appears at 179–181; the sequence is DGR. Tyr-215 bears the Phosphotyrosine; by TEC mark. The short motif at 221–223 is the Cell attachment site; atypical element; sequence DGR. Lys-228 participates in a covalent cross-link: Glycyl lysine isopeptide (Lys-Gly) (interchain with G-Cter in SUMO1). The heparin-binding stretch occupies residues 261–277; that stretch reads KRTGQYKLGSKTGPGQK.

Belongs to the heparin-binding growth factors family. As to quaternary structure, monomer. Homodimer. Interacts with FGFR1, FGFR2, FGFR3 and FGFR4. Affinity between fibroblast growth factors (FGFs) and their receptors is increased by heparan sulfate glycosaminoglycans that function as coreceptors. Interacts with CSPG4, FGFBP1 and TEC. Found in a complex with FGFBP1, FGF1 and FGF2. Interacts with FGFBP3. Interacts with integrin ITGAV:ITGB3; the interaction is required for FGF2 signaling. Interacts with SNORC (via the extracellular domain). Interacts with glypican GPC3. Post-translationally, phosphorylation at Tyr-215 regulates FGF2 unconventional secretion. Several N-termini starting at positions 94, 125, 126, 132, 143 and 162 have been identified by direct sequencing. As to expression, expressed in granulosa and cumulus cells. Expressed in hepatocellular carcinoma cells, but not in non-cancerous liver tissue.

Its subcellular location is the secreted. It is found in the nucleus. Acts as a ligand for FGFR1, FGFR2, FGFR3 and FGFR4. Also acts as an integrin ligand which is required for FGF2 signaling. Binds to integrin ITGAV:ITGB3. Plays an important role in the regulation of cell survival, cell division, cell differentiation and cell migration. Functions as a potent mitogen in vitro. Can induce angiogenesis. Mediates phosphorylation of ERK1/2 and thereby promotes retinal lens fiber differentiation. This Homo sapiens (Human) protein is Fibroblast growth factor 2 (FGF2).